The chain runs to 326 residues: Glycerol-3-phosphate dehydrogenase [NAD(P)+] (326 aa).

NADPH contacts are provided by Trp-13, Arg-33, and Lys-107. 3 residues coordinate sn-glycerol 3-phosphate: Lys-107, Gly-135, and Ser-137. Residue Ala-139 participates in NADPH binding. Sn-glycerol 3-phosphate-binding residues include Lys-190, Asp-243, Ser-253, Arg-254, and Asn-255. The Proton acceptor role is filled by Lys-190. Arg-254 serves as a coordination point for NADPH. The NADPH site is built by Leu-273 and Glu-275.

Belongs to the NAD-dependent glycerol-3-phosphate dehydrogenase family.

The protein resides in the cytoplasm. It carries out the reaction sn-glycerol 3-phosphate + NAD(+) = dihydroxyacetone phosphate + NADH + H(+). The enzyme catalyses sn-glycerol 3-phosphate + NADP(+) = dihydroxyacetone phosphate + NADPH + H(+). It participates in membrane lipid metabolism; glycerophospholipid metabolism. Functionally, catalyzes the reduction of the glycolytic intermediate dihydroxyacetone phosphate (DHAP) to sn-glycerol 3-phosphate (G3P), the key precursor for phospholipid synthesis. This chain is Glycerol-3-phosphate dehydrogenase [NAD(P)+], found in Brucella abortus (strain 2308).